Here is a 430-residue protein sequence, read N- to C-terminus: WD repeat-containing protein jip5 (430 aa).

WD repeat units follow at residues 9–48 (PLSSELFTQALHPTEPILSVGLSSGHVQCFRLPAAEAAAE), 72–111 (RHKGSCRTLGYNHDGEVLYSAGTDSLLKAAASSTGQVTSK), 117–158 (TNTD…SFKS), 215–262 (DQEE…DQSE), 272–318 (AGGE…GVVE), and 323–360 (DDIEAVVAVGFDVEGRLISGGGDTVKVWQEKVEEEEEE). The span at 356-374 (EEEEEEEEEEQEDIEDNDD) shows a compositional bias: acidic residues. The segment at 356 to 430 (EEEEEEEEEE…NGILKFKGME (75 aa)) is disordered. The span at 382 to 397 (HALERDSDDSDARADS) shows a compositional bias: basic and acidic residues. Residues 405-416 (RKKRKKKKKGKK) are compositionally biased toward basic residues.

Belongs to the WD repeat WDR55 family.

It localises to the nucleus. The protein localises to the nucleolus. The polypeptide is WD repeat-containing protein jip5 (jip5) (Botryotinia fuckeliana (strain B05.10) (Noble rot fungus)).